The sequence spans 127 residues: Modulator protein MzrA (127 aa).

The Cytoplasmic segment spans residues 1-11 (MRKPRVTLRHL). The helical transmembrane segment at 12–31 (AWSTMLLMVLGTGMLFWSAV) threads the bilayer. Residues 32–127 (RQQESTLAIR…RLRDAPHRMG (96 aa)) lie on the Periplasmic side of the membrane.

Belongs to the MzrA family. In terms of assembly, interacts with EnvZ.

Its subcellular location is the cell inner membrane. In terms of biological role, modulates the activity of the EnvZ/OmpR two-component regulatory system, probably by directly modulating EnvZ enzymatic activity and increasing stability of phosphorylated OmpR. The polypeptide is Modulator protein MzrA (Citrobacter rodentium (strain ICC168) (Citrobacter freundii biotype 4280)).